The primary structure comprises 1712 residues: MAGAWLRWGLLLWAGLLAWSAHGRVRRITYVVRPGPGLPAGTLPLAGPPRTFNVALDARYSRSSTATSSRSLAGPPAERTRRTSQPGGAALPGLRSPLPPEPARPGAPSRQLHSKAGAQTAVTRFAKHGRQVVRSKVQQDTQSSGGSRLQVQQKQQLQGINVCGGQCCHGWSKAPGSQRCTKPSCVPPCQNGGMCLRPQFCVCKPGTKGKACEITAAQDTMSPVFGGQNPGSSWVPPEPAAKRTSTKKADTLPRVSPVAQMTLTLKPKPSMGLSQQIHSQVAPLSSQNVMIRHGQTQEYVLKPKYFPAPKVVSGEQSTEGSFSLRYGQEQGTAPFQVSNHTGRIKVVFTPSICKVTCTKGNCHNSCQKGNTTTLISENGHAADTLTATNFRVVICHLPCMNGGQCSSRDKCQCPPNFTGKLCQIPVLGASMPKLYQHAQQPGKALGSHVIHSTHTLPLTMTNQQGVKVKFPPNIVNIHVKHPPEASVQIHQVSRIDGPVGQRVKEVQPGQSQVSYQGLPVQKTQTVHSTYSHQQVIPHVYPVAAKTQLGRCFQETIGSQCGKALPGLSKQEDCCGTVGTSWGFNKCQKCPKKQSYHGYTQMMECLQGYKRVNNTFCQDINECQLQGVCPNGECLNTMGSYRCSCKMGFGPDPTFSSCVPDPPMISEEKGPCYRLVSPGRQCMHPLSVHLTKQICCCSVGKAWGPQCEKCPLPGTAAFKEICPGGMGYTVSGIHRRRPIHQHIGKEAVFVKPKNTQPVAKSTHPPPLPAKEEPVEALTSSREHGPGVAEPEVVTAPPEKEIPSLDQEKTRLEPGQPQLSPGVSTIHLHPQFPVVVEKTSPPVPVEVAPEGSTSSASQVIAPTQVTEINECTVNPDICGAGHCINLPVRYTCICYEGYKFSEQQRKCIDIDECAQAQHLCSQGRCENTEGSFLCICPAGFIASEEGSNCIDVDECLRPDVCRDGRCINTAGAFRCEYCDSGYRMSRRGHCEDIDECLTPSTCPEEQCVNSPGSYQCVPCTEGFRGWNGQCLDVDECLQPKVCTNGSCTNLEGSYMCSCHKGYSPTPDHRHCQDIDECQQGNLCMNGQCKNTDGSFRCTCGQGYQLSAAKDQCEDIDECEHRHLCSHGQCRNTEGSFQCLCNQGYRASVLGDHCEDINECLEDSSVCQGGDCINTAGSYDCTCPDGLQLNDNKGCQDINECAQPGLCAPHGECLNTQGSFHCVCEQGFSISADGRTCEDIDECVNNTVCDSHGFCDNTAGSFRCLCYQGFQAPQDGQGCVDVNECELLSGVCGEAFCENVEGSFLCVCADENQEYSPMTGQCRSRATEDSGVDRQPKEEKKECYYNLNDASLCDNVLAPNVTKQECCCTSGAGWGDNCEIFPCPVQGTAEFSEMCPRGKGFVPAGESSYETGGENYKDADECLLFGEEICKNGYCLNTQPGYECYCKEGTYYDPVKLQCFDMDECQDPNSCIDGQCVNTEGSYNCFCTHPMVLDASEKRCVQPTESNEQIEETDVYQDLCWEHLSEEYVCSRPLVGKQTTYTECCCLYGEAWGMQCALCPMKDSDDYAQLCNIPVTGRRRPYGRDALVDFSEQYGPETDPYFIQDRFLNSFEELQAEECGILNGCENGRCVRVQEGYTCDCFDGYHLDMAKMTCVDVNECSELNNRMSLCKNAKCINTEGSYKCVCLPGYVPSDKPNYCTPLNTALNLDKDSDLE.

The N-terminal stretch at 1-20 (MAGAWLRWGLLLWAGLLAWS) is a signal peptide. Residues 63-148 (SSTATSSRSL…QDTQSSGGSR (86 aa)) are disordered. Polar residues predominate over residues 136 to 147 (KVQQDTQSSGGS). The EGF-like 1 domain occupies 181-213 (TKPSCVPPCQNGGMCLRPQFCVCKPGTKGKACE). Intrachain disulfides connect C185–C195, C189–C201, and C203–C212. N-linked (GlcNAc...) asparagine glycans are attached at residues N339 and N370. Positions 391–423 (RVVICHLPCMNGGQCSSRDKCQCPPNFTGKLCQ) constitute an EGF-like 2 domain. Intrachain disulfides connect C395–C405, C399–C411, C413–C422, C551–C573, C560–C586, and C574–C589. Residue N416 is glycosylated (N-linked (GlcNAc...) asparagine). The TB 1 domain maps to 549–601 (GRCFQETIGSQCGKALPGLSKQEDCCGTVGTSWGFNKCQKCPKKQSYHGYTQM). N-linked (GlcNAc...) asparagine glycosylation occurs at N612. The 41-residue stretch at 618-658 (DINECQLQGVCPNGECLNTMGSYRCSCKMGFGPDPTFSSCV) folds into the EGF-like 3; calcium-binding domain. 7 cysteine pairs are disulfide-bonded: C622–C633, C628–C642, C644–C657, C671–C694, C681–C706, C695–C709, and C696–C721. An O-linked (Glc) serine glycan is attached at S639. Residues 669–721 (GPCYRLVSPGRQCMHPLSVHLTKQICCCSVGKAWGPQCEKCPLPGTAAFKEIC) enclose the TB 2 domain. Residues 752 to 803 (KNTQPVAKSTHPPPLPAKEEPVEALTSSREHGPGVAEPEVVTAPPEKEIPSL) are disordered. 2 O-linked (GalNAc...) threonine glycosylation sites follow: T761 and T793. An EGF-like 4; calcium-binding domain is found at 865 to 906 (EINECTVNPDICGAGHCINLPVRYTCICYEGYKFSEQQRKCI). 37 disulfide bridges follow: C869–C881, C876–C890, C892–C905, C911–C923, C918–C932, C934–C947, C953–C964, C959–C973, C976–C988, C994–C1005, C1000–C1014, C1017–C1028, C1034–C1045, C1040–C1054, C1056–C1069, C1075–C1086, C1081–C1095, C1097–C1110, C1116–C1127, C1122–C1136, C1138–C1151, C1157–C1169, C1164–C1178, C1180–C1192, C1198–C1210, C1204–C1219, C1221–C1234, C1240–C1252, C1246–C1261, C1263–C1276, C1282–C1294, C1289–C1303, C1305–C1319, C1340–C1363, C1350–C1375, C1364–C1380, and C1365–C1392. Residues 907-948 (DIDECAQAQHLCSQGRCENTEGSFLCICPAGFIASEEGSNCI) form the EGF-like 5; calcium-binding domain. O-linked (Glc) serine glycosylation occurs at S929. The EGF-like 6; calcium-binding domain maps to 949–989 (DVDECLRPDVCRDGRCINTAGAFRCEYCDSGYRMSRRGHCE). The residue at position 966 (N966) is a (3R)-3-hydroxyasparagine. The 40-residue stretch at 990-1029 (DIDECLTPSTCPEEQCVNSPGSYQCVPCTEGFRGWNGQCL) folds into the EGF-like 7; calcium-binding domain. S1011 carries O-linked (Glc) serine glycosylation. The EGF-like 8; calcium-binding domain maps to 1030–1070 (DVDECLQPKVCTNGSCTNLEGSYMCSCHKGYSPTPDHRHCQ). Residue N1042 is glycosylated (N-linked (GlcNAc...) asparagine). Residue S1051 is glycosylated (O-linked (Glc) serine). Residues 1071-1111 (DIDECQQGNLCMNGQCKNTDGSFRCTCGQGYQLSAAKDQCE) enclose the EGF-like 9; calcium-binding domain. Residues 1112–1152 (DIDECEHRHLCSHGQCRNTEGSFQCLCNQGYRASVLGDHCE) form the EGF-like 10; calcium-binding domain. N1129 is modified ((3R)-3-hydroxyasparagine). S1133 carries O-linked (Glc) serine glycosylation. The EGF-like 11; calcium-binding domain maps to 1153–1193 (DINECLEDSSVCQGGDCINTAGSYDCTCPDGLQLNDNKGCQ). Residues 1194–1235 (DINECAQPGLCAPHGECLNTQGSFHCVCEQGFSISADGRTCE) enclose the EGF-like 12; calcium-binding domain. O-linked (Glc) serine glycosylation occurs at S1216. The EGF-like 13; calcium-binding domain occupies 1236–1277 (DIDECVNNTVCDSHGFCDNTAGSFRCLCYQGFQAPQDGQGCV). N1242 is a glycosylation site (N-linked (GlcNAc...) asparagine). Residues 1278-1320 (DVNECELLSGVCGEAFCENVEGSFLCVCADENQEYSPMTGQCR) form the EGF-like 14; calcium-binding domain. The tract at residues 1335 to 1402 (EEKKECYYNL…PRGKGFVPAG (68 aa)) is 8-Cys3 region. Positions 1338-1392 (KECYYNLNDASLCDNVLAPNVTKQECCCTSGAGWGDNCEIFPCPVQGTAEFSEMC) constitute a TB 3 domain. The N-linked (GlcNAc...) asparagine glycan is linked to N1357. S1405 carries the post-translational modification Phosphoserine. The region spanning 1415-1457 (DADECLLFGEEICKNGYCLNTQPGYECYCKEGTYYDPVKLQCF) is the EGF-like 15; calcium-binding domain. Disulfide bonds link C1419/C1432, C1427/C1441, C1443/C1456, C1462/C1473, C1468/C1482, C1484/C1497, C1517/C1541, C1527/C1553, C1542/C1556, and C1543/C1568. The 41-residue stretch at 1458–1498 (DMDECQDPNSCIDGQCVNTEGSYNCFCTHPMVLDASEKRCV) folds into the EGF-like 16; calcium-binding domain. O-linked (Glc) serine glycosylation occurs at S1479. A C-terminal domain region spans residues 1498–1712 (VQPTESNEQI…LNLDKDSDLE (215 aa)). The TB 4 domain maps to 1515 to 1568 (DLCWEHLSEEYVCSRPLVGKQTTYTECCCLYGEAWGMQCALCPMKDSDDYAQLC). Phosphoserine occurs at positions 1588 and 1607. Residues 1612–1652 (QAEECGILNGCENGRCVRVQEGYTCDCFDGYHLDMAKMTCV) enclose the EGF-like 17 domain. Disulfide bonds link C1616–C1627, C1622–C1636, C1638–C1651, C1657–C1672, C1667–C1681, and C1683–C1696. The EGF-like 18; calcium-binding domain occupies 1653–1697 (DVNECSELNNRMSLCKNAKCINTEGSYKCVCLPGYVPSDKPNYCT). A glycan (O-linked (Glc) serine) is linked at S1678.

Belongs to the LTBP family. Interacts with TGFB1; associates via disulfide bonds with the Latency-associated peptide chain (LAP) regulatory chain of TGFB1, leading to regulate activation of TGF-beta-1. LTBP1 does not bind directly to TGF-beta-1, the active chain of TGFB1. Interacts (via C-terminal domain) with FBN1 (via N-terminal domain). Interacts with FBN2. Interacts with ADAMTSL2. Interacts with EFEMP2. Contains hydroxylated asparagine residues. Post-translationally, two intrachain disulfide bonds from the TB3 domain are rearranged upon TGFB1 binding, and form interchain bonds with TGFB1 propeptide, anchoring it to the extracellular matrix. In terms of processing, O-glycosylated on serine residues by POGLUT2 and POGLUT3.

The protein localises to the secreted. Its subcellular location is the extracellular space. The protein resides in the extracellular matrix. Its function is as follows. Key regulator of transforming growth factor beta (TGFB1, TGFB2 and TGFB3) that controls TGF-beta activation by maintaining it in a latent state during storage in extracellular space. Associates specifically via disulfide bonds with the Latency-associated peptide (LAP), which is the regulatory chain of TGF-beta, and regulates integrin-dependent activation of TGF-beta. Outcompeted by LRRC32/GARP for binding to LAP regulatory chain of TGF-beta. This Rattus norvegicus (Rat) protein is Latent-transforming growth factor beta-binding protein 1 (Ltbp1).